We begin with the raw amino-acid sequence, 428 residues long: Light-independent protochlorophyllide reductase subunit N (428 aa).

[4Fe-4S] cluster contacts are provided by Cys29, Cys54, and Cys115.

This sequence belongs to the BchN/ChlN family. As to quaternary structure, protochlorophyllide reductase is composed of three subunits; BchL, BchN and BchB. Forms a heterotetramer of two BchB and two BchN subunits. [4Fe-4S] cluster is required as a cofactor.

The catalysed reaction is chlorophyllide a + oxidized 2[4Fe-4S]-[ferredoxin] + 2 ADP + 2 phosphate = protochlorophyllide a + reduced 2[4Fe-4S]-[ferredoxin] + 2 ATP + 2 H2O. Its pathway is porphyrin-containing compound metabolism; bacteriochlorophyll biosynthesis (light-independent). Its function is as follows. Component of the dark-operative protochlorophyllide reductase (DPOR) that uses Mg-ATP and reduced ferredoxin to reduce ring D of protochlorophyllide (Pchlide) to form chlorophyllide a (Chlide). This reaction is light-independent. The NB-protein (BchN-BchB) is the catalytic component of the complex. This chain is Light-independent protochlorophyllide reductase subunit N, found in Cereibacter sphaeroides (strain ATCC 17025 / ATH 2.4.3) (Rhodobacter sphaeroides).